Reading from the N-terminus, the 398-residue chain is Vacuolar protease A (398 aa).

Positions Met-1–Ala-18 are cleaved as a signal peptide. Positions Ala-19 to Met-70 are cleaved as a propeptide — activation peptide. The region spanning Tyr-85–Ala-395 is the Peptidase A1 domain. The active site involves Asp-103. Residues Cys-116 and Cys-121 are joined by a disulfide bond. N-linked (GlcNAc...) asparagine glycosylation is present at Asn-138. Residue Asp-287 is part of the active site. A disulfide bridge links Cys-321 with Cys-354. Asn-338 carries an N-linked (GlcNAc...) asparagine glycan.

Belongs to the peptidase A1 family.

Its subcellular location is the vacuole lumen. The protein localises to the secreted. It catalyses the reaction Hydrolysis of proteins with broad specificity for peptide bonds. Cleaves -Leu-Leu-|-Val-Tyr- bond in a synthetic substrate. Does not act on esters of Tyr or Arg.. Functionally, vacuolar aspartic endopeptidase which is probably also secreted and contributes to virulence. The chain is Vacuolar protease A (pep2) from Aspergillus fumigatus (strain ATCC MYA-4609 / CBS 101355 / FGSC A1100 / Af293) (Neosartorya fumigata).